A 267-amino-acid chain; its full sequence is Ribosomal RNA small subunit methyltransferase A (267 aa).

Residues Asn-18, Leu-20, Gly-45, Glu-66, Asp-91, and Asn-112 each coordinate S-adenosyl-L-methionine.

Belongs to the class I-like SAM-binding methyltransferase superfamily. rRNA adenine N(6)-methyltransferase family. RsmA subfamily.

Its subcellular location is the cytoplasm. It catalyses the reaction adenosine(1518)/adenosine(1519) in 16S rRNA + 4 S-adenosyl-L-methionine = N(6)-dimethyladenosine(1518)/N(6)-dimethyladenosine(1519) in 16S rRNA + 4 S-adenosyl-L-homocysteine + 4 H(+). Its function is as follows. Specifically dimethylates two adjacent adenosines (A1518 and A1519) in the loop of a conserved hairpin near the 3'-end of 16S rRNA in the 30S particle. May play a critical role in biogenesis of 30S subunits. The protein is Ribosomal RNA small subunit methyltransferase A of Shewanella pealeana (strain ATCC 700345 / ANG-SQ1).